The sequence spans 528 residues: Acid-sensing ion channel 1 (528 aa).

Residues 1 to 49 are Cytoplasmic-facing; the sequence is MELKAEEEEVGGVQPVSIQAFASSSTLHGLAHIFSYERLSLKRALWALC. The helical transmembrane segment at 50 to 66 threads the bilayer; the sequence is FLGSLAVLLCVCTERVQ. The Extracellular segment spans residues 67 to 427; that stretch reads YYFHYHHVTK…ETIEQKKAYE (361 aa). 7 disulfide bridges follow: Cys93–Cys194, Cys172–Cys179, Cys290–Cys367, Cys310–Cys363, Cys314–Cys361, Cys323–Cys345, and Cys325–Cys337. N-linked (GlcNAc...) asparagine glycans are attached at residues Asn368 and Asn395. Residues 428–458 form a discontinuously helical membrane-spanning segment; it reads IAGLLGDIGGQMGLFIGASILTVLELFDYAY. The GAS motif; ion selectivity filter motif lies at 444-446; sequence GAS. Residues 459–528 lie on the Cytoplasmic side of the membrane; sequence EVIKHKLCRR…ARGTFEDFTC (70 aa). Phosphoserine; by PKA is present on Ser479. Phosphoserine is present on Ser499.

Belongs to the amiloride-sensitive sodium channel (TC 1.A.6) family. ASIC1 subfamily. As to quaternary structure, forms functional homotrimeric channels. Forms heterotrimers with other ASIC proteins, resulting in channels with distinct properties. Interacts with PICK1; regulates ASIC1 clustering in membranes. Interacts with STOM; alters heterotrimeric channels activity. PH-gating could be regulated by serine proteases. In terms of processing, phosphorylation by PKA regulates interaction with PICK1 and subcellular localization. Phosphorylation by PKC may regulate the channel. As to expression, expressed in neurons throughout the central and peripheral nervous system.

Its subcellular location is the cell membrane. The protein localises to the postsynaptic cell membrane. The protein resides in the cell projection. It is found in the dendrite. It carries out the reaction Na(+)(in) = Na(+)(out). It catalyses the reaction K(+)(in) = K(+)(out). The catalysed reaction is Li(+)(in) = Li(+)(out). The enzyme catalyses Ca(2+)(in) = Ca(2+)(out). Its activity is regulated as follows. Potentiated by FMRFamide-related neuropeptides, which are induced during inflammation and modulate pain responses. Inhibited by the diuretic drug amiloride. Spider venom psalmotoxin-1 inhibits the channel by locking it in its desensitized conformation. The homotrimeric channel is inhibited by the spider venom pi-theraphotoxin-Hm3a. Homotrimeric and heterotrimeric (with ASIC2 isoform 1) channels are inhibited by the snake venom mambalgin-1, which prevents proton-induced transitions from the resting closed state to the active and/or desensitized states. Inhibited by Texas coral snake toxin MitTx1. Forms voltage-independent, pH-gated trimeric sodium channels that act as postsynaptic excitatory receptors in the nervous system, playing a crucial role in regulating synaptic plasticity, learning, and memory. Upon extracellular pH drop this channel elicits transient, fast activating, and completely desensitizing inward currents. Displays high selectivity for sodium ions but can also permit the permeation of other cations. Regulates more or less directly intracellular calcium concentration and CaMKII phosphorylation, and thereby the density of dendritic spines. Modulates neuronal activity in the circuits underlying innate fear. Its function is as follows. Has high selectivity for sodium ions, but can also be permeable to other cations including calcium, lithium and potassium. Functionally, produces acid activated currents with a reduced amplitude and inactivates faster. Has high selectivity for sodium ions but also supports a calcium-mediated current which is sustained and maintained as long as acidic conditions are present. Also potentially permeable to lithium and potassium. In terms of biological role, has no measurable proton-gated sodium channel activity in vitro. This is Acid-sensing ion channel 1 from Homo sapiens (Human).